Here is a 684-residue protein sequence, read N- to C-terminus: Glycine--tRNA ligase beta subunit (684 aa).

This sequence belongs to the class-II aminoacyl-tRNA synthetase family. In terms of assembly, tetramer of two alpha and two beta subunits.

Its subcellular location is the cytoplasm. The catalysed reaction is tRNA(Gly) + glycine + ATP = glycyl-tRNA(Gly) + AMP + diphosphate. The polypeptide is Glycine--tRNA ligase beta subunit (Pseudomonas putida (strain ATCC 47054 / DSM 6125 / CFBP 8728 / NCIMB 11950 / KT2440)).